The sequence spans 77 residues: Conotoxin King-Kong 1 (77 aa).

The N-terminal stretch at 1–22 is a signal peptide; sequence MKLTCMMIVAVLFLTAWTFATA. The propeptide occupies 23-49; it reads DDSSNGLENLFSKAHHEMKNPEASKLN. Intrachain disulfides connect Cys-52-Cys-67, Cys-59-Cys-71, and Cys-66-Cys-76. Met-61 carries the post-translational modification Methionine sulfoxide; partial.

The protein belongs to the conotoxin O1 superfamily. As to expression, expressed by the venom duct.

It localises to the secreted. This chain is Conotoxin King-Kong 1, found in Conus textile (Cloth-of-gold cone).